A 264-amino-acid polypeptide reads, in one-letter code: MPQTVRAYTGAIRDTVKSFWHGLSITLSYLARRPTTVQYPDRTPMPVRDMLPPRYRGFLEVDSGICTGCQACERACPIGCIQISLEKDAANPKQRVVTQFDIDEAKCMFCGLCVEPCPTGSIQHTREFEGTHKHIRNLVFRWADPMNPFPVYKVDKNAEYYPRVPLGSLVRQRLETMAWDRSAPQFLPPEPPKPAEAKPAAKAAPAAKPAAAAPAAPAAAAPAAAPAPAKPAAAPAPAAAAAPAAPAAEAPAAPAAPAANPESK.

4Fe-4S ferredoxin-type domains lie at 57-86 (GFLE…ISLE) and 98-127 (TQFD…HTRE). Residues C66, C69, C72, C76, C107, C110, C113, and C117 each coordinate [4Fe-4S] cluster. Residues 183-264 (APQFLPPEPP…AAPAANPESK (82 aa)) form a disordered region. Low complexity predominate over residues 197-264 (AKPAAKAAPA…AAPAANPESK (68 aa)).

The protein belongs to the complex I 23 kDa subunit family. NDH-1 is composed of 14 different subunits. Subunits NuoA, H, J, K, L, M, N constitute the membrane sector of the complex. Requires [4Fe-4S] cluster as cofactor.

The protein localises to the cell inner membrane. The enzyme catalyses a quinone + NADH + 5 H(+)(in) = a quinol + NAD(+) + 4 H(+)(out). Its function is as follows. NDH-1 shuttles electrons from NADH, via FMN and iron-sulfur (Fe-S) centers, to quinones in the respiratory chain. The immediate electron acceptor for the enzyme in this species is believed to be ubiquinone. Couples the redox reaction to proton translocation (for every two electrons transferred, four hydrogen ions are translocated across the cytoplasmic membrane), and thus conserves the redox energy in a proton gradient. The sequence is that of NADH-quinone oxidoreductase subunit I 2 from Anaeromyxobacter dehalogenans (strain 2CP-C).